Reading from the N-terminus, the 210-residue chain is ATP-dependent Clp protease proteolytic subunit (210 aa).

S107 (nucleophile) is an active-site residue. The active site involves H132.

Belongs to the peptidase S14 family. In terms of assembly, fourteen ClpP subunits assemble into 2 heptameric rings which stack back to back to give a disk-like structure with a central cavity, resembling the structure of eukaryotic proteasomes.

The protein resides in the cytoplasm. The catalysed reaction is Hydrolysis of proteins to small peptides in the presence of ATP and magnesium. alpha-casein is the usual test substrate. In the absence of ATP, only oligopeptides shorter than five residues are hydrolyzed (such as succinyl-Leu-Tyr-|-NHMec, and Leu-Tyr-Leu-|-Tyr-Trp, in which cleavage of the -Tyr-|-Leu- and -Tyr-|-Trp bonds also occurs).. Its function is as follows. Cleaves peptides in various proteins in a process that requires ATP hydrolysis. Has a chymotrypsin-like activity. Plays a major role in the degradation of misfolded proteins. The protein is ATP-dependent Clp protease proteolytic subunit of Cereibacter sphaeroides (strain ATCC 17025 / ATH 2.4.3) (Rhodobacter sphaeroides).